The primary structure comprises 829 residues: Translation initiation factor IF-2 (829 aa).

Residues 128–137 (QNAEEEKVEA) show a composition bias toward basic and acidic residues. The segment at 128–157 (QNAEEEKVEASAKTVQNNEDIQPQTSKKKE) is disordered. Residues 140–152 (KTVQNNEDIQPQT) show a composition bias toward polar residues. The tr-type G domain occupies 327–497 (TRAPVVTVMG…LLIAEMQDLK (171 aa)). Residues 336–343 (GHVDHGKT) form a G1 region. 336 to 343 (GHVDHGKT) contributes to the GTP binding site. Residues 361–365 (GITQH) are G2. Residues 383-386 (DTPG) are G3. GTP contacts are provided by residues 383–387 (DTPGH) and 437–440 (NKID). Residues 437–440 (NKID) form a G4 region. Residues 473–475 (SAL) are G5.

It belongs to the TRAFAC class translation factor GTPase superfamily. Classic translation factor GTPase family. IF-2 subfamily.

It localises to the cytoplasm. Functionally, one of the essential components for the initiation of protein synthesis. Protects formylmethionyl-tRNA from spontaneous hydrolysis and promotes its binding to the 30S ribosomal subunits. Also involved in the hydrolysis of GTP during the formation of the 70S ribosomal complex. The polypeptide is Translation initiation factor IF-2 (Rickettsia felis (strain ATCC VR-1525 / URRWXCal2) (Rickettsia azadi)).